Here is a 44-residue protein sequence, read N- to C-terminus: Thymosin beta-4 (44 aa).

Composition is skewed to basic and acidic residues over residues 1-25 and 33-44; these read MSDKPDMAEIEKFDKAKLKKTETQE and ETIEQEKQTSES. Positions 1–44 are disordered; it reads MSDKPDMAEIEKFDKAKLKKTETQEKNPLPSKETIEQEKQTSES. Position 2 is an N-acetylserine (S2).

This sequence belongs to the thymosin beta family. As to expression, spleen, kidney, heart, and oocytes.

Its subcellular location is the cytoplasm. It localises to the cytoskeleton. Plays an important role in the organization of the cytoskeleton. Binds to and sequesters actin monomers (G actin) and therefore inhibits actin polymerization. The chain is Thymosin beta-4 (tmsb4) from Xenopus laevis (African clawed frog).